The primary structure comprises 303 residues: Coenzyme PQQ synthesis protein B (303 aa).

This sequence belongs to the PqqB family.

It functions in the pathway cofactor biosynthesis; pyrroloquinoline quinone biosynthesis. In terms of biological role, may be involved in the transport of PQQ or its precursor to the periplasm. The chain is Coenzyme PQQ synthesis protein B from Pseudomonas fluorescens (strain SBW25).